A 122-amino-acid polypeptide reads, in one-letter code: Large-conductance mechanosensitive channel (122 aa).

The next 2 membrane-spanning stretches (helical) occupy residues 14–34 (VLDL…VKSL) and 67–87 (GAFL…FILI).

The protein belongs to the MscL family. In terms of assembly, homopentamer.

The protein localises to the cell membrane. Functionally, channel that opens in response to stretch forces in the membrane lipid bilayer. May participate in the regulation of osmotic pressure changes within the cell. This chain is Large-conductance mechanosensitive channel, found in Lactococcus lactis subsp. lactis (strain IL1403) (Streptococcus lactis).